Here is a 359-residue protein sequence, read N- to C-terminus: Glutamate 5-kinase (359 aa).

Position 7 (Lys7) interacts with ATP. Positions 47, 135, and 147 each coordinate substrate. Residue Ser202–Lys208 participates in ATP binding. Residues Lys266–Ser343 enclose the PUA domain.

It belongs to the glutamate 5-kinase family.

The protein localises to the cytoplasm. The enzyme catalyses L-glutamate + ATP = L-glutamyl 5-phosphate + ADP. It functions in the pathway amino-acid biosynthesis; L-proline biosynthesis; L-glutamate 5-semialdehyde from L-glutamate: step 1/2. Functionally, catalyzes the transfer of a phosphate group to glutamate to form L-glutamate 5-phosphate. The protein is Glutamate 5-kinase of Kosmotoga olearia (strain ATCC BAA-1733 / DSM 21960 / TBF 19.5.1).